Reading from the N-terminus, the 155-residue chain is Small ribosomal subunit protein uS7 (155 aa).

The protein belongs to the universal ribosomal protein uS7 family. Part of the 30S ribosomal subunit. Contacts proteins S9 and S11.

In terms of biological role, one of the primary rRNA binding proteins, it binds directly to 16S rRNA where it nucleates assembly of the head domain of the 30S subunit. Is located at the subunit interface close to the decoding center, probably blocks exit of the E-site tRNA. This chain is Small ribosomal subunit protein uS7, found in Petrotoga mobilis (strain DSM 10674 / SJ95).